The primary structure comprises 1163 residues: DNA-directed RNA polymerase subunit beta'' (1163 aa).

Residues Cys-16, Cys-87, Cys-94, and Cys-97 each contribute to the Zn(2+) site.

Belongs to the RNA polymerase beta' chain family. RpoC2 subfamily. In terms of assembly, in plastids the minimal PEP RNA polymerase catalytic core is composed of four subunits: alpha, beta, beta', and beta''. When a (nuclear-encoded) sigma factor is associated with the core the holoenzyme is formed, which can initiate transcription. It depends on Zn(2+) as a cofactor.

Its subcellular location is the plastid. It localises to the chloroplast. It carries out the reaction RNA(n) + a ribonucleoside 5'-triphosphate = RNA(n+1) + diphosphate. DNA-dependent RNA polymerase catalyzes the transcription of DNA into RNA using the four ribonucleoside triphosphates as substrates. The protein is DNA-directed RNA polymerase subunit beta'' (rpoC2) of Pisum sativum (Garden pea).